The sequence spans 117 residues: Large ribosomal subunit protein bL19 (117 aa).

The protein belongs to the bacterial ribosomal protein bL19 family.

Functionally, this protein is located at the 30S-50S ribosomal subunit interface and may play a role in the structure and function of the aminoacyl-tRNA binding site. This Christiangramia forsetii (strain DSM 17595 / CGMCC 1.15422 / KT0803) (Gramella forsetii) protein is Large ribosomal subunit protein bL19.